We begin with the raw amino-acid sequence, 443 residues long: Leucine-rich repeat-containing protein 17 (443 aa).

The N-terminal stretch at 1–15 (MRIVAILLLFCLCRA) is a signal peptide. Residues 20 to 48 (KSSPGVLRSQGNPSRSHGRGGRRGSSPVK) are disordered. 3 LRR repeats span residues 84-105 (DLLH…MFAK), 108-129 (RLKS…AFFG), and 132-153 (KLTT…AFIY). The LRRCT 1 domain occupies 165 to 216 (NPWHCTCELETLISMLQIPRNRNLGNYAKCGSPPALRNKKLLQLKPQELCDE). An LRRNT domain is found at 229 to 270 (SGIPAVIRPEADSTLCHNYVFPIQTLDCKRKELKKVPSNIPP). LRR repeat units follow at residues 271–292 (DIVK…EFED), 295–316 (ELKK…AFLG), and 319–342 (HLEE…EDLY). An LRRCT 2 domain is found at 352–404 (NPWRCDYSIHYLYYWLKHHYNVHYNGLECKTPEEYKGWSVGKYVRSYYEECPK).

As to expression, expressed in osteoblasts, spleen, lung and heart.

Its subcellular location is the secreted. The protein localises to the extracellular space. Functionally, involved in bone homeostasis. Acts as a negative regulator of RANKL-induced osteoclast precursor differentiation from bone marrow precursors. The protein is Leucine-rich repeat-containing protein 17 (Lrrc17) of Mus musculus (Mouse).